Here is a 445-residue protein sequence, read N- to C-terminus: ATP synthase subunit b-delta (445 aa).

The tract at residues 1–168 (MSTFIGQLVG…PAAAEVERPV (168 aa)) is ATP synthase subunit b. Residues 4 to 24 (FIGQLVGFAAIVFLVWRYVVP) traverse the membrane as a helical segment. The ATP synthase subunit delta stretch occupies residues 169–445 (AAKMRSASRR…LTAAEAQLPD (277 aa)).

This sequence in the N-terminal section; belongs to the ATPase B chain family. It in the C-terminal section; belongs to the ATPase delta chain family. In terms of assembly, F-type ATPases have 2 components, F(1) - the catalytic core - and F(0) - the membrane proton channel. F(1) has five subunits: alpha(3), beta(3), gamma(1), delta(1), epsilon(1). F(0) has three main subunits: a(1), b(2) and c(10-14). The alpha and beta chains form an alternating ring which encloses part of the gamma chain. F(1) is attached to F(0) by a central stalk formed by the gamma and epsilon chains, while a peripheral stalk is formed by the delta and b chains.

It localises to the cell membrane. Its function is as follows. F(1)F(0) ATP synthase produces ATP from ADP in the presence of a proton or sodium gradient. F-type ATPases consist of two structural domains, F(1) containing the extramembraneous catalytic core and F(0) containing the membrane proton channel, linked together by a central stalk and a peripheral stalk. During catalysis, ATP synthesis in the catalytic domain of F(1) is coupled via a rotary mechanism of the central stalk subunits to proton translocation. In terms of biological role, this fusion protein includes a component of the F(0) channel (subunit b) and of the F(1) subunit (subunit delta). Two copies of subunit b and one of delta together form the peripheral 'stator' stalk which links F(1) to F(0). In Mycobacterium ulcerans (strain Agy99), this protein is ATP synthase subunit b-delta (atpFH).